The following is a 612-amino-acid chain: Protein brambleberry (612 aa).

A signal peptide spans 1-20 (MALWFVLLWVSSLQYAEVEA). The next 2 membrane-spanning stretches (helical) occupy residues 364-384 (LWTC…LSFL) and 417-437 (LTLL…LLWA). 2 disordered regions span residues 452 to 476 (LSIY…PASS) and 555 to 574 (NRSR…SFSG). The span at 457-470 (PKEKTPEKQHEFGE) shows a compositional bias: basic and acidic residues. The span at 556–574 (RSRSSSPNQSLASSSSFSG) shows a compositional bias: low complexity.

The protein localises to the nucleus membrane. Required for nuclear membrane fusion during karyogamy. This Danio rerio (Zebrafish) protein is Protein brambleberry (bmb).